The following is a 516-amino-acid chain: GMP synthase [glutamine-hydrolyzing] (516 aa).

The 195-residue stretch at 5-199 (PIVILDFGSQ…ARKICGITSK (195 aa)) folds into the Glutamine amidotransferase type-1 domain. Cysteine 82 serves as the catalytic Nucleophile. Residues histidine 173 and glutamate 175 contribute to the active site. A GMPS ATP-PPase domain is found at 200–391 (WDMGHFAKEQ…LGLPREMVYR (192 aa)). 227–233 (SGGVDSS) contacts ATP.

Homodimer.

The enzyme catalyses XMP + L-glutamine + ATP + H2O = GMP + L-glutamate + AMP + diphosphate + 2 H(+). It functions in the pathway purine metabolism; GMP biosynthesis; GMP from XMP (L-Gln route): step 1/1. Its function is as follows. Catalyzes the synthesis of GMP from XMP. In Nitratiruptor sp. (strain SB155-2), this protein is GMP synthase [glutamine-hydrolyzing].